Here is a 34-residue protein sequence, read N- to C-terminus: KEGYPTNSEGCKITXLFNDPYCKGXCINLSTQAD.

The LCN-type CS-alpha/beta domain occupies Lys-1–Asp-34.

Expressed by the venom gland.

It is found in the secreted. Its function is as follows. Does not cause symptoms of intoxication, paralysis or death in insects (A.domestica). The chain is Non-toxic venom protein from Rhopalurus junceus (Caribbean blue scorpion).